We begin with the raw amino-acid sequence, 466 residues long: 3-isopropylmalate dehydratase large subunit (466 aa).

Positions 347, 408, and 411 each coordinate [4Fe-4S] cluster.

It belongs to the aconitase/IPM isomerase family. LeuC type 1 subfamily. In terms of assembly, heterodimer of LeuC and LeuD. It depends on [4Fe-4S] cluster as a cofactor.

It catalyses the reaction (2R,3S)-3-isopropylmalate = (2S)-2-isopropylmalate. Its pathway is amino-acid biosynthesis; L-leucine biosynthesis; L-leucine from 3-methyl-2-oxobutanoate: step 2/4. Its function is as follows. Catalyzes the isomerization between 2-isopropylmalate and 3-isopropylmalate, via the formation of 2-isopropylmaleate. This is 3-isopropylmalate dehydratase large subunit from Herminiimonas arsenicoxydans.